The sequence spans 213 residues: Adenylate kinase (213 aa).

Position 10-15 (glycine 10–threonine 15) interacts with ATP. The tract at residues serine 30 to isoleucine 59 is NMP. AMP-binding positions include arginine 36, asparagine 57–isoleucine 59, glycine 83–arginine 86, and glutamine 90. Positions asparagine 125 to aspartate 160 are LID. Arginine 126 provides a ligand contact to ATP. Zn(2+) is bound by residues cysteine 129 and cysteine 132. Isoleucine 135–tyrosine 136 lines the ATP pocket. Residues cysteine 146 and cysteine 149 each coordinate Zn(2+). The AMP site is built by arginine 157 and arginine 169. Leucine 195 provides a ligand contact to ATP.

It belongs to the adenylate kinase family. In terms of assembly, monomer.

The protein resides in the cytoplasm. The enzyme catalyses AMP + ATP = 2 ADP. It functions in the pathway purine metabolism; AMP biosynthesis via salvage pathway; AMP from ADP: step 1/1. In terms of biological role, catalyzes the reversible transfer of the terminal phosphate group between ATP and AMP. Plays an important role in cellular energy homeostasis and in adenine nucleotide metabolism. The polypeptide is Adenylate kinase (Wolbachia sp. subsp. Drosophila simulans (strain wRi)).